Consider the following 1090-residue polypeptide: MTSGDLSSVLNILRSLYKRTRTLEEFADGVVFREGRRAALLQPSDTHSFKSFVRGVFVCSDEELQDVPSCNQTCTFPELLAFILNSLKRKRRRNVLAHGYNFLGVAQEDRDADHFRFQGDLSQSAAYIHSSDLWKKVTARLGTDVTRYLLGSCSVFVLAPPSCVFQICGVPAYDRVSMTTASSGFLLRPPSRKHKSFQVGKKTRSANLTKTGSVGDVEESRKRRRVESEVSTRKRKRESEEEESRERRRGVHHEERRQHEAVLDESTLSGKSGENDAAAVKPPPETSAAPPPLEGGPSWRSGAFPPLPSSQCFIRTLGFLYGGRGMHGFCLNRKRRTAAGPRRLQGQDLVRLVFFEGLPYLNGQERKPKKLPLRYFNMVPVFGRLLQRHRKCRYSSVLHRMCPVVELSRAAQGELSSLIPQHCAPHRVYLFVRECLTAVVPEELWGSDHNRLQFFSRVRGFLKSGKFERISVAELMWKIKVMDCDWLKLRRTAGRFPPSELAYRTRILSQFLTWLLDGFVVGLVRACFYATESVGQKNAIRFYRQEVWSKLQDLAFRRHIAKGEMEELSPAQVASLPKGTVISQLRFIPKTDGMRPITRVIGADSNTRLHHKRIRDLMSMLQARVRSAPALLGSTVWGMTDIHKVLRSLAPAQKDKPQPLYFVKVDVSGAYDSLPHDKLKEVITEALSPVQEEVFTVRHYAKIWADSHEGLKKAFARQVDFSDGSMGSTSMKGFVMSLQKSSKVHHAVLVEQAFGSNLRGKDALQFFTQMLTGSVVQHGKKTYRQCRGIPQGSVVSSLLCCLCYGHMENVLFRDIKNKGWLMRLVDDFLLITPDRNQAQSFLSILLAGVPQYGVVANPQKVVVNFQGSEGGGAFPDIRVLPPHCLFPWCGLLLDTRSLDVCKDYSSYAGLSLRYSLTLGSAHSAGQQMRRKLMSILRIKCHPLFLDLKTNSLESAYKNIHKLVLLQACRFHVCVQSLPFAQTVAKNPTYFQQMIWDMAHYANALIRRSNTGLVLGDGAQKGSVQYEAVELLFCLAFLRVLSKHRPVYKDLLPRLHKWKRRLERLLGDLRLARVRQAANPRALLDFLAMQM.

The segment at 184 to 301 (GFLLRPPSRK…PLEGGPSWRS (118 aa)) is disordered. A compositionally biased stretch (basic residues) spans 190 to 204 (PSRKHKSFQVGKKTR). Basic and acidic residues-rich tracts occupy residues 218–232 (EESR…EVST) and 252–262 (HHEERRQHEAV). Residues 281 to 294 (KPPPETSAAPPPLE) show a composition bias toward pro residues. A TFLY; involved in RNA binding motif is present at residues 316-321 (TLGFLY). Interaction with RNA template regions lie at residues 371–376 (LPLRYF) and 477–503 (WKIK…ELAY). Residues 569–893 (SPAQVASLPK…CLFPWCGLLL (325 aa)) form the Reverse transcriptase domain. Mg(2+)-binding residues include Asp666, Asp826, and Asp827.

This sequence belongs to the reverse transcriptase family. Telomerase subfamily. As to quaternary structure, catalytic subunit of the telomerase holoenzyme complex composed minimally of TERT and the telomerase RNA template component (TERC). Expressed at highest levels in gonads and brain, and at lower levels in heart, spleen, kidney, gill, muscle and skin. Detected in embryonic stem cell lines before and after differentiation. Isoform F is expressed in gonads, with higher levels in testis relative to ovary, but is not detected in other tissues. Isoform B is expressed predominantly in testis. Isoform C is up-regulated in embryonic stem cell lines after differentiation.

It localises to the nucleus. Its subcellular location is the chromosome. The protein resides in the telomere. It catalyses the reaction DNA(n) + a 2'-deoxyribonucleoside 5'-triphosphate = DNA(n+1) + diphosphate. Functionally, telomerase is a ribonucleoprotein enzyme essential for the replication of chromosome termini in most eukaryotes. It elongates telomeres. It is a reverse transcriptase that adds simple sequence repeats to chromosome ends by copying a template sequence within the RNA component of the enzyme. The protein is Telomerase reverse transcriptase of Oryzias latipes (Japanese rice fish).